Reading from the N-terminus, the 567-residue chain is Phosphoglucomutase-like protein 5 (567 aa).

The disordered stretch occupies residues 1 to 26 (MEGSPIPVLTVPTAPYEDQRPTGGGG). A Phosphothreonine modification is found at threonine 120. Serine 122 carries the post-translational modification Phosphoserine.

This sequence belongs to the phosphohexose mutase family. In terms of assembly, interacts with DMD/dystrophin; the interaction is direct. Interacts with UTRN/utrophin.

The protein resides in the cell junction. The protein localises to the adherens junction. It is found in the cytoplasm. It localises to the cytoskeleton. Its subcellular location is the cell membrane. The protein resides in the sarcolemma. Functionally, component of adherens-type cell-cell and cell-matrix junctions. Has no phosphoglucomutase activity in vitro. The protein is Phosphoglucomutase-like protein 5 of Mus musculus (Mouse).